A 95-amino-acid polypeptide reads, in one-letter code: Late cornified envelope protein 3B (95 aa).

A compositionally biased stretch (low complexity) spans 1 to 13; that stretch reads MSCQQNQQQCQPL. 2 disordered regions span residues 1 to 29 and 68 to 95; these read MSCQQNQQQCQPLPKCPSPKCPPKSSAQC and RQSSNSCDRGSGQQDGASDCGYGSGGCC.

Belongs to the LCE family. Skin-specific. Expression was readily detected in adult trunk skin, adult arm skin, fetal skin, penal skin, vulva, esophagus and tongue. Not expressed in the cervix, rectum, lung, colon, or placenta.

In terms of biological role, a structural component of the cornified envelope of the stratum corneum involved in innate cutaneous host defense. Possesses defensin-like antimicrobial activity against a broad spectrum of Gram-positive and Gram-negative bacteria, both aerobic and anaerobic species. Upon inflammation, may regulate skin barrier repair by shaping cutaneous microbiota composition and immune response to bacterial antigens. The sequence is that of Late cornified envelope protein 3B from Homo sapiens (Human).